The sequence spans 88 residues: Small ribosomal subunit protein uS15 (88 aa).

This sequence belongs to the universal ribosomal protein uS15 family. As to quaternary structure, part of the 30S ribosomal subunit. Forms a bridge to the 50S subunit in the 70S ribosome, contacting the 23S rRNA.

Its function is as follows. One of the primary rRNA binding proteins, it binds directly to 16S rRNA where it helps nucleate assembly of the platform of the 30S subunit by binding and bridging several RNA helices of the 16S rRNA. Functionally, forms an intersubunit bridge (bridge B4) with the 23S rRNA of the 50S subunit in the ribosome. This is Small ribosomal subunit protein uS15 from Mycoplasmopsis pulmonis (strain UAB CTIP) (Mycoplasma pulmonis).